A 101-amino-acid polypeptide reads, in one-letter code: MIPGEYQLADGDVQANVGRKTVKLEVVNSGDRPIQVGSHYHFFETNHALKFDRLQARGMRLNVPSGNAVRFEPGEAKEVELVEFGGNKVIYGFHNEIDGKL.

Belongs to the urease beta subunit family. In terms of assembly, heterotrimer of UreA (gamma), UreB (beta) and UreC (alpha) subunits. Three heterotrimers associate to form the active enzyme.

It localises to the cytoplasm. It catalyses the reaction urea + 2 H2O + H(+) = hydrogencarbonate + 2 NH4(+). The protein operates within nitrogen metabolism; urea degradation; CO(2) and NH(3) from urea (urease route): step 1/1. The chain is Urease subunit beta from Actinobacillus pleuropneumoniae serotype 7 (strain AP76).